Consider the following 463-residue polypeptide: Glutamate--tRNA ligase 1 (463 aa).

The 'HIGH' region signature appears at 11 to 21 (PSPTGYLHIGG). The 'KMSKS' region signature appears at 240-244 (KLSKR). K243 contacts ATP.

The protein belongs to the class-I aminoacyl-tRNA synthetase family. Glutamate--tRNA ligase type 1 subfamily. In terms of assembly, monomer.

Its subcellular location is the cytoplasm. It carries out the reaction tRNA(Glu) + L-glutamate + ATP = L-glutamyl-tRNA(Glu) + AMP + diphosphate. Its function is as follows. Catalyzes the attachment of glutamate to tRNA(Glu) in a two-step reaction: glutamate is first activated by ATP to form Glu-AMP and then transferred to the acceptor end of tRNA(Glu). This Campylobacter jejuni subsp. doylei (strain ATCC BAA-1458 / RM4099 / 269.97) protein is Glutamate--tRNA ligase 1.